The sequence spans 900 residues: Probable dipeptidyl-aminopeptidase B (900 aa).

Residues 1 to 83 form a disordered region; sequence MARTDQGLGA…DILSHPRDKS (83 aa). Over 1-90 the chain is Cytoplasmic; the sequence is MARTDQGLGA…DKSKRSRGSR (90 aa). A compositionally biased stretch (low complexity) spans 24-39; it reads NSFSSTDSLSTDGSLF. Over residues 44–55 the composition is skewed to polar residues; it reads NATQFQKSTQLP. The helical; Signal-anchor for type II membrane protein transmembrane segment at 91-111 threads the bilayer; that stretch reads WIWVIGLLCLGGWILAFILFW. At 112–900 the chain is on the vacuolar side; sequence GRRNNNSDIS…HHVGSALAAT (789 aa). Residues Asn150, Asn195, Asn348, Asn410, Asn514, Asn639, and Asn644 are each glycosylated (N-linked (GlcNAc...) asparagine). Residue Ser753 is the Charge relay system of the active site. An N-linked (GlcNAc...) asparagine glycan is attached at Asn812. Residues Asp830 and His863 each act as charge relay system in the active site.

It belongs to the peptidase S9B family.

Its subcellular location is the vacuole membrane. The catalysed reaction is Release of an N-terminal dipeptide, Xaa-Yaa-|-Zaa-, from a polypeptide, preferentially when Yaa is Pro, provided Zaa is neither Pro nor hydroxyproline.. In terms of biological role, type IV dipeptidyl-peptidase which removes N-terminal dipeptides sequentially from polypeptides having unsubstituted N-termini provided that the penultimate residue is proline. In Talaromyces stipitatus (strain ATCC 10500 / CBS 375.48 / QM 6759 / NRRL 1006) (Penicillium stipitatum), this protein is Probable dipeptidyl-aminopeptidase B (dapB).